The sequence spans 118 residues: MGLREKIKAQRERRKRSIRIKIEGSSERPRLTVHKSLKYVSAQIIDDSKGITLASASSQEKDLKSGKNVDIAKEIGKVLATRAKEKNISEVVFDRNGYIYHGKIKSLADGAREAGLKF.

Belongs to the universal ribosomal protein uL18 family. In terms of assembly, part of the 50S ribosomal subunit; part of the 5S rRNA/L5/L18/L25 subcomplex. Contacts the 5S and 23S rRNAs.

Functionally, this is one of the proteins that bind and probably mediate the attachment of the 5S RNA into the large ribosomal subunit, where it forms part of the central protuberance. The polypeptide is Large ribosomal subunit protein uL18 (Brachyspira hyodysenteriae (strain ATCC 49526 / WA1)).